The chain runs to 118 residues: Putative pterin-4-alpha-carbinolamine dehydratase (118 aa).

The protein belongs to the pterin-4-alpha-carbinolamine dehydratase family.

It carries out the reaction (4aS,6R)-4a-hydroxy-L-erythro-5,6,7,8-tetrahydrobiopterin = (6R)-L-erythro-6,7-dihydrobiopterin + H2O. The polypeptide is Putative pterin-4-alpha-carbinolamine dehydratase (Xanthomonas oryzae pv. oryzae (strain PXO99A)).